Reading from the N-terminus, the 290-residue chain is Shikimate dehydrogenase (NADP(+)) (290 aa).

Shikimate-binding positions include 22 to 24 and Thr-68; that span reads SLS. Lys-72 (proton acceptor) is an active-site residue. Asp-84 provides a ligand contact to NADP(+). Shikimate-binding residues include Asn-93 and Asp-108. Residues 133–137 and Ile-228 each bind NADP(+); that span reads GSGGS. Position 230 (Tyr-230) interacts with shikimate. Gly-251 contacts NADP(+).

Belongs to the shikimate dehydrogenase family. In terms of assembly, homodimer.

The enzyme catalyses shikimate + NADP(+) = 3-dehydroshikimate + NADPH + H(+). It participates in metabolic intermediate biosynthesis; chorismate biosynthesis; chorismate from D-erythrose 4-phosphate and phosphoenolpyruvate: step 4/7. Functionally, involved in the biosynthesis of the chorismate, which leads to the biosynthesis of aromatic amino acids. Catalyzes the reversible NADPH linked reduction of 3-dehydroshikimate (DHSA) to yield shikimate (SA). The polypeptide is Shikimate dehydrogenase (NADP(+)) (Leptospira interrogans serogroup Icterohaemorrhagiae serovar Lai (strain 56601)).